Reading from the N-terminus, the 377-residue chain is Ribosomal RNA large subunit methyltransferase G (377 aa).

Belongs to the methyltransferase superfamily. RlmG family.

The protein resides in the cytoplasm. The catalysed reaction is guanosine(1835) in 23S rRNA + S-adenosyl-L-methionine = N(2)-methylguanosine(1835) in 23S rRNA + S-adenosyl-L-homocysteine + H(+). Specifically methylates the guanine in position 1835 (m2G1835) of 23S rRNA. This is Ribosomal RNA large subunit methyltransferase G from Streptomyces coelicolor (strain ATCC BAA-471 / A3(2) / M145).